The sequence spans 434 residues: Adenylosuccinate synthetase (434 aa).

Residues glycine 22–lysine 28 and glycine 50–threonine 52 contribute to the GTP site. Aspartate 23 functions as the Proton acceptor in the catalytic mechanism. Mg(2+) is bound by residues aspartate 23 and glycine 50. IMP is bound by residues aspartate 23 to lysine 26, asparagine 48 to histidine 51, threonine 139, arginine 153, glutamine 234, threonine 249, and arginine 313. Catalysis depends on histidine 51, which acts as the Proton donor. Alanine 309–arginine 315 lines the substrate pocket. Residues arginine 315, lysine 341–aspartate 343, and serine 423–glycine 425 each bind GTP.

Belongs to the adenylosuccinate synthetase family. In terms of assembly, homodimer. Requires Mg(2+) as cofactor.

The protein localises to the cytoplasm. The enzyme catalyses IMP + L-aspartate + GTP = N(6)-(1,2-dicarboxyethyl)-AMP + GDP + phosphate + 2 H(+). The protein operates within purine metabolism; AMP biosynthesis via de novo pathway; AMP from IMP: step 1/2. Functionally, plays an important role in the de novo pathway of purine nucleotide biosynthesis. Catalyzes the first committed step in the biosynthesis of AMP from IMP. This chain is Adenylosuccinate synthetase, found in Chlorobium luteolum (strain DSM 273 / BCRC 81028 / 2530) (Pelodictyon luteolum).